A 312-amino-acid polypeptide reads, in one-letter code: 1-(5-phosphoribosyl)-5-[(5-phosphoribosylamino)methylideneamino] imidazole-4-carboxamide isomerase HISN3, chloroplastic (312 aa).

Residues 1–67 (MRSPASTPSI…IHKGKVKQIV (67 aa)) constitute a chloroplast transit peptide. Asp57 is a 1-(5-phospho-beta-D-ribosyl)-5-[(5-phospho-beta-D-ribosylamino)methylideneamino]imidazole-4-carboxamide binding site. Gln65 is a 5-[(5-phospho-1-deoxy-D-ribulos-1-ylimino)methylamino]-1-(5-phospho-beta-D-ribosyl)imidazole-4-carboxamide binding site. Na(+) is bound by residues Gln65 and Ile66. 1-(5-phospho-beta-D-ribosyl)-5-[(5-phospho-beta-D-ribosylamino)methylideneamino]imidazole-4-carboxamide is bound at residue Gly68. Residues His108, Gly138, Thr158, and Ser159 each coordinate 5-[(5-phospho-1-deoxy-D-ribulos-1-ylimino)methylamino]-1-(5-phospho-beta-D-ribosyl)imidazole-4-carboxamide. 1-(5-phospho-beta-D-ribosyl)-5-[(5-phospho-beta-D-ribosylamino)methylideneamino]imidazole-4-carboxamide is bound by residues Gly138, Thr158, and Ser159. Residues Ser159 and Phe162 each coordinate Na(+). 1-(5-phospho-beta-D-ribosyl)-5-[(5-phospho-beta-D-ribosylamino)methylideneamino]imidazole-4-carboxamide is bound by residues Asp187, Arg203, Trp204, and His230. Asp187 serves as a coordination point for 5-[(5-phospho-1-deoxy-D-ribulos-1-ylimino)methylamino]-1-(5-phospho-beta-D-ribosyl)imidazole-4-carboxamide. Residue Trp204 participates in 5-[(5-phospho-1-deoxy-D-ribulos-1-ylimino)methylamino]-1-(5-phospho-beta-D-ribosyl)imidazole-4-carboxamide binding. A Na(+)-binding site is contributed by Glu235. Positions 236, 262, 285, and 286 each coordinate 1-(5-phospho-beta-D-ribosyl)-5-[(5-phospho-beta-D-ribosylamino)methylideneamino]imidazole-4-carboxamide. 5-[(5-phospho-1-deoxy-D-ribulos-1-ylimino)methylamino]-1-(5-phospho-beta-D-ribosyl)imidazole-4-carboxamide is bound by residues Gly236, Gly262, Gly285, and Ser286.

Belongs to the HisA/HisF family. Requires Na(+) as cofactor.

The protein resides in the plastid. The protein localises to the chloroplast. It catalyses the reaction 1-(5-phospho-beta-D-ribosyl)-5-[(5-phospho-beta-D-ribosylamino)methylideneamino]imidazole-4-carboxamide = 5-[(5-phospho-1-deoxy-D-ribulos-1-ylimino)methylamino]-1-(5-phospho-beta-D-ribosyl)imidazole-4-carboxamide. The protein operates within amino-acid biosynthesis; L-histidine biosynthesis; L-histidine from 5-phospho-alpha-D-ribose 1-diphosphate: step 4/9. Functionally, component of the histidine biosynthesis pathway that catalyzes the isomerization of 5'-ProFAR (pro-phosphoribosyl formimino-5-aminoimidazole-4-carboxamide ribonucleotide, referred as 1-(5-phospho-beta-D-ribosyl)-5-[(5-phospho-beta-D-ribosylamino)methylideneamino]imidazole-4-carboxamide) to PrFAR (phosphoribulosyl formimino-5-aminoimidazole-4-carboxamide ribonucleotide, referred as 5-[(5-phospho-1-deoxy-D-ribulos-1-ylimino)methylamino]-1-(5-phospho-beta-D-ribosyl)imidazole-4-carboxamide). The chain is 1-(5-phosphoribosyl)-5-[(5-phosphoribosylamino)methylideneamino] imidazole-4-carboxamide isomerase HISN3, chloroplastic from Medicago truncatula (Barrel medic).